The primary structure comprises 637 residues: Extracellular metalloproteinase MEP (637 aa).

The N-terminal stretch at 1-21 (MRSVDSLLLLGLTGLASQANA) is a signal peptide. Residues 22–246 (HPAKRQPNDS…VVGVVDYVAD (225 aa)) constitute a propeptide that is removed on maturation. The N-linked (GlcNAc...) asparagine glycan is linked to Asn-288. Residue His-431 participates in Zn(2+) binding. The active site involves Glu-432. His-435 provides a ligand contact to Zn(2+).

It belongs to the peptidase M36 family. Requires Zn(2+) as cofactor.

Its subcellular location is the secreted. Secreted metalloproteinase that probably acts as a virulence factor. Cleaves Z.mays Endochitinase A (CHIA) between residues 'Gly-29' and 'Cys-30'. This is Extracellular metalloproteinase MEP (MEP) from Fusarium vanettenii (strain ATCC MYA-4622 / CBS 123669 / FGSC 9596 / NRRL 45880 / 77-13-4) (Fusarium solani subsp. pisi).